The following is a 181-amino-acid chain: Malignant T-cell-amplified sequence 2 (181 aa).

In terms of domain architecture, PUA spans 92–171 (LPHQQVDKGA…IGIENIHYLN (80 aa)).

Belongs to the MCTS1 family.

It localises to the cytoplasm. This is Malignant T-cell-amplified sequence 2 from Mus musculus (Mouse).